Reading from the N-terminus, the 295-residue chain is Tyrosine recombinase XerD (295 aa).

Residues 1-85 (MNTIIEEYLN…TIRSFHQFAL (85 aa)) enclose the Core-binding (CB) domain. One can recognise a Tyr recombinase domain in the interval 106-289 (KLPDVLEIDE…SKSQIRKMYT (184 aa)). Active-site residues include R146, K170, H241, R244, and H267. Y276 (O-(3'-phospho-DNA)-tyrosine intermediate) is an active-site residue.

It belongs to the 'phage' integrase family. XerD subfamily. In terms of assembly, forms a cyclic heterotetrameric complex composed of two molecules of XerC and two molecules of XerD.

Its subcellular location is the cytoplasm. Its function is as follows. Site-specific tyrosine recombinase, which acts by catalyzing the cutting and rejoining of the recombining DNA molecules. The XerC-XerD complex is essential to convert dimers of the bacterial chromosome into monomers to permit their segregation at cell division. It also contributes to the segregational stability of plasmids. In Staphylococcus epidermidis (strain ATCC 35984 / DSM 28319 / BCRC 17069 / CCUG 31568 / BM 3577 / RP62A), this protein is Tyrosine recombinase XerD.